We begin with the raw amino-acid sequence, 382 residues long: MGLTFWKVFLILNCLAGQVNGVQVTIPDSFVNVTVGSDVTLICTYATTVASLNKLSIQWTFFHKEASQPVSIYYSEGGQATAIGKFKDRIVGSNTSGNASITISHMQPEDSGIYICDVNNPTDFFGKNQGTISVSVLVKPSKPFCSIQGIAETGHPISLTCLSVLGTPSPVYYWYKLEGRNIVPVKENFNPATGILFIGNLTTFEQGYYQCTAINILGNSSCEIDLTTPYPGIGIIVGAFVGTLIGVIIIISVVWFVRRKVKAKGKERKRNSKTTTELEPMTKINQRTEGETMPREDAIQLEATLPSSTHETEPNATLGPDHEPIPEPEPALQPTVEPPSGPELVPMSELEIQLEPEPAPQQEPEPLIVDEPFCDEEKVIKP.

A signal peptide spans 1–21 (MGLTFWKVFLILNCLAGQVNG). The Ig-like V-type domain maps to 22 to 133 (VQVTIPDSFV…FFGKNQGTIS (112 aa)). Residues 22–234 (VQVTIPDSFV…DLTTPYPGIG (213 aa)) are Extracellular-facing. Residue Asn-32 is glycosylated (N-linked (GlcNAc...) asparagine). Intrachain disulfides connect Cys-43–Cys-116 and Cys-161–Cys-211. An Ig-like C2-type domain is found at 140 to 227 (PSKPFCSIQG…GNSSCEIDLT (88 aa)). 2 N-linked (GlcNAc...) asparagine glycosylation sites follow: Asn-200 and Asn-219. Residues 235–255 (IIVGAFVGTLIGVIIIISVVW) traverse the membrane as a helical segment. Over 256 to 382 (FVRRKVKAKG…FCDEEKVIKP (127 aa)) the chain is Cytoplasmic. The segment at 266 to 382 (KERKRNSKTT…FCDEEKVIKP (117 aa)) is disordered. The segment covering 273–285 (KTTTELEPMTKIN) has biased composition (polar residues). A compositionally biased stretch (basic and acidic residues) spans 286 to 298 (QRTEGETMPREDA). Pro residues predominate over residues 327-341 (EPEPALQPTVEPPSG).

It is found in the membrane. The chain is V-set and immunoglobulin domain-containing protein 1 (VSIG1) from Bos taurus (Bovine).